The following is a 283-amino-acid chain: MELNKTSESLFSAKIDHNHPRTEAHEPRDQREVRVFSLEGRSSTRQEKADRMPGRTSSRQESSKGSEEGAVHESTAGVSSKEEEESKGDGFFTGGNPTSGMALVETPMAVVSEAMVETSTMTVSQVDLQWVEQLVTSTVESLLVADIDGKQLVEIVLDNSNTVPAAFCGANLTLVQTGEEISVSFSNFVDQAQLTEATQLVQQNPKQLVSLVESLKARQLNLTELVVGNVAVSLPTIEKIETPLHMIAATIRHHDQEGDQEGEGRQDQHQGQHQEKKVEEAHI.

The segment covering 1-10 (MELNKTSESL) has biased composition (polar residues). Disordered stretches follow at residues 1–99 (MELN…NPTS) and 255–283 (DQEG…EAHI). Basic and acidic residues-rich tracts occupy residues 14–34 (KIDH…REVR), 42–53 (SSTRQEKADRMP), and 61–71 (ESSKGSEEGAV).

The protein belongs to the chlamydial CPn_0705/CT_671/TC_0042 family.

This is an uncharacterized protein from Chlamydia trachomatis serovar D (strain ATCC VR-885 / DSM 19411 / UW-3/Cx).